Consider the following 237-residue polypeptide: Ubiquinone biosynthesis O-methyltransferase (237 aa).

S-adenosyl-L-methionine is bound by residues Arg-38, Gly-58, Asp-79, and Met-124.

This sequence belongs to the methyltransferase superfamily. UbiG/COQ3 family.

It carries out the reaction a 3-demethylubiquinol + S-adenosyl-L-methionine = a ubiquinol + S-adenosyl-L-homocysteine + H(+). The catalysed reaction is a 3-(all-trans-polyprenyl)benzene-1,2-diol + S-adenosyl-L-methionine = a 2-methoxy-6-(all-trans-polyprenyl)phenol + S-adenosyl-L-homocysteine + H(+). It participates in cofactor biosynthesis; ubiquinone biosynthesis. In terms of biological role, O-methyltransferase that catalyzes the 2 O-methylation steps in the ubiquinone biosynthetic pathway. The protein is Ubiquinone biosynthesis O-methyltransferase of Acinetobacter baumannii (strain SDF).